Here is a 498-residue protein sequence, read N- to C-terminus: POTE ankyrin domain family member A (498 aa).

ANK repeat units follow at residues 98 to 127 (KKRT…QLHV), 131 to 160 (KKRT…DPNL), 164 to 193 (YGNT…DIES), 197 to 226 (GGLT…NLNA), and 230 to 259 (FGRT…DVFS). Residues 289–410 (NQMPNNSSGN…SNEKNKVKSQ (122 aa)) are disordered. A compositionally biased stretch (polar residues) spans 290–302 (QMPNNSSGNSNPE). Basic and acidic residues predominate over residues 303–338 (QDLKLTSEEEPQRLKGSENSQHEKVTQEPDINKDCD). The segment covering 348 to 359 (HGSNNVGLSENL) has biased composition (polar residues). Positions 392–406 (EEYHRPEKKSNEKNK) are enriched in basic and acidic residues. A coiled-coil region spans residues 469 to 497 (EHLLELKNSHYEQLTVEVEQMENMVHVLQ).

Belongs to the POTE family.

In Homo sapiens (Human), this protein is POTE ankyrin domain family member A (POTEA).